The primary structure comprises 578 residues: GPI-anchor transamidase component PIGT (578 aa).

The signal sequence occupies residues 1-21 (MAAAMPLALLVLLLLGPGGWC). The Lumenal portion of the chain corresponds to 22 to 525 (LAEPPRDSLR…NLPTPDFSMP (504 aa)). Asparagine 164 is a glycosylation site (N-linked (GlcNAc...) asparagine). Disulfide bonds link cysteine 195-cysteine 272 and cysteine 226-cysteine 231. 2 N-linked (GlcNAc...) asparagine glycosylation sites follow: asparagine 291 and asparagine 327. Positions 461, 521, 523, and 527 each coordinate a 2-acyl-6-[6-phosphoethanolamine-alpha-D-mannosyl-(1-&gt;2)-6-phosphoethanolamine-alpha-D-mannosyl-(1-&gt;6)-2-phosphoethanolamine-alpha-D-mannosyl-(1-&gt;4)-alpha-D-glucosaminyl]-1-(1-radyl,2-acyl-sn-glycero-3-phospho)-1D-myo-inositol. Residues 526-548 (YNVICLTCTVVAVCYGSFYNLLT) traverse the membrane as a helical segment. The Cytoplasmic portion of the chain corresponds to 549-578 (RTFHIEEPRTGGLAKRLANLIRRARGVPPL).

Belongs to the PIGT family. In terms of assembly, heteropentamer. Part of the GPI-anchor transamidase complex, consisting of PIGK, PIGT, PIGS, PIGU and GAA1. The disulfide bond between PIGK/GPI8 and PIGT is important for normal enzyme activity.

The protein resides in the endoplasmic reticulum membrane. It functions in the pathway glycolipid biosynthesis; glycosylphosphatidylinositol-anchor biosynthesis. Functionally, component of the glycosylphosphatidylinositol-anchor (GPI-anchor) transamidase (GPI-T) complex that catalyzes the formation of the linkage between a proprotein and a GPI-anchor and participates in GPI anchored protein biosynthesis. May play a crucial role in GPI-T complex assembly in the luminal layer. Binds GPI-anchor. The sequence is that of GPI-anchor transamidase component PIGT from Homo sapiens (Human).